Consider the following 614-residue polypeptide: MTKDIEYLTADYDNEKSSIQSVIDAIEGQDFLDVDTTMDDAVSDVSSLDEDGAISLTSSVVGPQGSKLMGYYQNELYDYASQLDSKMKEIIDTPFIEDIDKAFKGITNVKLENILIKNGGGHGRDTYGASGKIAKGDAKKSDSDVYSIDEILKSDQEFVKVIDQHYKEMKKEDKKLSKSDFEKMMTQGASCDYMTVAEAEELEEQKKKEEAIEIAALAGMVVLSCINPVAGAVAIGAYSAYSAANAATGKNIVTGRKLSKEERIMEGLSLIPLPGMGFLKGAGKSLMKLGFKGGEKFAVKTGLQKTMQQAVSRISPKMGMMKNSVLNQSRNFAQNTHVGQMLSNMRGQATHTVQQSRNWIGQQAQNVKRIVNNGLDKEIAHPFKQQLAPAGMGGIKFAETTTLRNMGQNIKRAVTPQNHVTHGPKDSMVRSEGKHSISSHEMNSSKYVESPNYTKVEFGEHYARLRPKKLKANIEYTTPTGHIYRTDHKGRIKEVYVDNLSLKDGDRNSHAQRTVGGEDRLPDDDGGHLIARMFGGSKDIDNLVAQSKFINRPFKEKGHWYNLEKEWQEFLNSGKEVKNIKMEVKYSGNSQRPTIFKVEYEINGERNIRRILNK.

Residues 417 to 445 (QNHVTHGPKDSMVRSEGKHSISSHEMNSS) are disordered. Basic and acidic residues predominate over residues 423–435 (GPKDSMVRSEGKH).

The protein belongs to the EssD family. In terms of assembly, interacts (via C-terminal) with EssG; this interaction blocks EssD activity. Interacts with EssE.

Its subcellular location is the secreted. The protein resides in the cell membrane. In terms of biological role, component of the type VII secretion system (Ess). Plays a role in Ess secretion during infection. Required for the efficient secretion of EsxA. Required for abscess formation and staphylococcal persistence in host tissues. Possesses a toxic DNase activity that is modulated by EsaG by forming a nuclease toxin-antitoxin pair. This nuclease toxin targets competitor bacteria. This chain is Type VII secretion system protein EssD, found in Staphylococcus aureus (strain USA300).